We begin with the raw amino-acid sequence, 212 residues long: Actin-depolymerizing factor 1, isoforms a/b (212 aa).

One can recognise an ADF-H domain in the interval 3–159 (SGVMVDPDVQ…SHKELLNNCP (157 aa)).

This sequence belongs to the actin-binding proteins ADF family. Interacts with F-actin.

Depolymerizes growing actin filaments in muscle cells; required for the assembly of actin filaments into the functional contractile myofilament lattice of muscle. Competes with unc-87 for actin binding and inhibits the actin-bundling activity of unc-87. The chain is Actin-depolymerizing factor 1, isoforms a/b from Caenorhabditis elegans.